A 363-amino-acid chain; its full sequence is NAD(P)H-quinone oxidoreductase subunit 1, chloroplastic (363 aa).

6 helical membrane-spanning segments follow: residues Leu30 to Leu50, Phe98 to Phe118, Ile129 to Gly149, Tyr248 to Ser268, Val300 to Ile320, and Leu336 to Thr356.

Belongs to the complex I subunit 1 family. As to quaternary structure, NDH is composed of at least 16 different subunits, 5 of which are encoded in the nucleus.

Its subcellular location is the plastid. It is found in the chloroplast thylakoid membrane. The catalysed reaction is a plastoquinone + NADH + (n+1) H(+)(in) = a plastoquinol + NAD(+) + n H(+)(out). The enzyme catalyses a plastoquinone + NADPH + (n+1) H(+)(in) = a plastoquinol + NADP(+) + n H(+)(out). In terms of biological role, NDH shuttles electrons from NAD(P)H:plastoquinone, via FMN and iron-sulfur (Fe-S) centers, to quinones in the photosynthetic chain and possibly in a chloroplast respiratory chain. The immediate electron acceptor for the enzyme in this species is believed to be plastoquinone. Couples the redox reaction to proton translocation, and thus conserves the redox energy in a proton gradient. This Vitis vinifera (Grape) protein is NAD(P)H-quinone oxidoreductase subunit 1, chloroplastic.